We begin with the raw amino-acid sequence, 328 residues long: POU domain, class 5, transcription factor 2 (328 aa).

The interval Met1 to Met25 is disordered. Residues Asp118 to Glu192 enclose the POU-specific domain. Residues Gly210–Thr269 constitute a DNA-binding region (homeobox).

Belongs to the POU transcription factor family. Class-5 subfamily. As to expression, expressed in skeletal and cardiac muscles, brain, heart and lung. Little or no detectable expression found in pancreas, kidney, liver or placenta.

It is found in the nucleus. In terms of biological role, transcription factor that binds preferentially to the octamer motif (5'-ATGTTAAT-3'). May exert a regulatory function in meiotic events that are required for terminal differentiation of male germ cell. This chain is POU domain, class 5, transcription factor 2 (POU5F2), found in Homo sapiens (Human).